The primary structure comprises 502 residues: Hexose transporter 1 (502 aa).

At 1–26 the chain is on the cytoplasmic side; sequence MKKSSKEISSSQSLKNGGSDHFFNTS. The chain crosses the membrane as a helical span at residues 27-47; it reads LMYVLAACLASFIFGYQVSVL. Residues 48–76 are Extracellular-facing; the sequence is NTIKNFIVIEFGWCTGNKVECDDSTLKSS. Residues Cys-61 and Cys-68 are joined by a disulfide bond. Residues 77-97 form a helical membrane-spanning segment; it reads FLLASVFIGAVVGSGFSGYLV. At 98-102 the chain is on the cytoplasmic side; the sequence is QHGRR. Residues 103-123 traverse the membrane as a helical segment; it reads FSLLVIYNFFILVSILTSITH. Residues 124–132 lie on the Extracellular side of the membrane; the sequence is HFHTILFSR. The helical transmembrane segment at 133–153 threads the bilayer; sequence LLSGFGIGLITVSVPMYISEM. At 154 to 163 the chain is on the cytoplasmic side; the sequence is THKDKKGAYG. Residues 164-184 traverse the membrane as a helical segment; that stretch reads VLHQLFITFGIFVAVLLGMAM. Gln-167 contacts alpha-D-glucose. Gln-167 provides a ligand contact to beta-D-glucose. Residues 185 to 205 are Extracellular-facing; it reads GEAPDAKSVDALGEFQKIWWR. Residues 206–226 traverse the membrane as a helical segment; it reads LMFFFPCLISILGIVLLTFFY. Over 227 to 291 the chain is Cytoplasmic; the sequence is KEETPYYLFE…RAMQIPSYRN (65 aa). The helical transmembrane segment at 292–312 threads the bilayer; that stretch reads VILLGCILSGLQQFTGINVLV. Alpha-D-glucose contacts are provided by Gln-303, Gln-304, and Asn-309. Position 303 (Gln-303) interacts with beta-D-glucose. Asn-309 serves as a coordination point for beta-D-glucose. The Extracellular portion of the chain corresponds to 313–329; the sequence is SNSNELYKEFLSNKLIT. Residues 330-350 traverse the membrane as a helical segment; it reads TLSVIMTVVNFLMTFPAIYIV. Asn-339 contacts beta-D-glucose. Topologically, residues 351 to 356 are cytoplasmic; the sequence is EKLGRK. The chain crosses the membrane as a helical span at residues 357 to 377; sequence TLLLCGCAGVICAFLPTAIAN. Residues 378-390 lie on the Extracellular side of the membrane; the sequence is QIDSTSAFVKNLS. A helical membrane pass occupies residues 391 to 411; it reads IAATFVMIISFAVSYGPVLWI. Trp-410 is an alpha-D-glucose binding site. Over 412-427 the chain is Cytoplasmic; the sequence is YLHEMFPSEIKDSAAS. Residues 428–448 form a helical membrane-spanning segment; sequence LASLVNWVCAIIVVFPSDIII. Residues 449–453 are Extracellular-facing; it reads KKSPT. A helical transmembrane segment spans residues 454–474; that stretch reads ILFFIFSGMSILSFLFIFFFI. The Cytoplasmic segment spans residues 475-502; it reads KETKGGEIGTSPYITMEERQKHMGKSAV.

The protein belongs to the major facilitator superfamily. Sugar transporter (TC 2.A.1.1) family. Homodimer.

Its subcellular location is the cell membrane. The enzyme catalyses D-glucose(out) = D-glucose(in). It catalyses the reaction D-fructose(out) = D-fructose(in). It carries out the reaction D-galactose(in) = D-galactose(out). The catalysed reaction is D-mannose(out) = D-mannose(in). The enzyme catalyses D-glucosamine(out) = D-glucosamine(in). It catalyses the reaction D-xylose(out) = D-xylose(in). With respect to regulation, inhibited by compound 3361 (3-O-((undec-10-en)-1-yl)-D-glucose). Sodium-independent facilitative hexose transporter. Can transport D-glucose and D-fructose. Can transport D-mannose, D-galactose, D-xylose and D-glucosamine. The sequence is that of Hexose transporter 1 from Plasmodium vivax (strain Brazil I).